A 128-amino-acid chain; its full sequence is uncharacterized protein (128 aa).

Residues 1-26 form a disordered region; sequence MNSATSETTTNTGAAETTTSTGAAET. The helical transmembrane segment at 105–127 threads the bilayer; it reads IANGLLTNNGISVFISTVLLAIV.

Belongs to the flocculin family.

It is found in the membrane. This is an uncharacterized protein from Saccharomyces cerevisiae (strain ATCC 204508 / S288c) (Baker's yeast).